We begin with the raw amino-acid sequence, 35 residues long: Cecropin (35 aa).

Isoleucine 35 carries the isoleucine amide modification.

The protein belongs to the cecropin family.

The protein localises to the secreted. Its function is as follows. Cecropins have lytic and antibacterial activity against several Gram-positive and Gram-negative bacteria. This is Cecropin from Bombyx mori (Silk moth).